The chain runs to 417 residues: Serine hydroxymethyltransferase (417 aa).

(6S)-5,6,7,8-tetrahydrofolate contacts are provided by residues Leu-121 and 125–127 (GHL). Position 229 is an N6-(pyridoxal phosphate)lysine (Lys-229). 355–357 (SPF) is a (6S)-5,6,7,8-tetrahydrofolate binding site.

Belongs to the SHMT family. As to quaternary structure, homodimer. It depends on pyridoxal 5'-phosphate as a cofactor.

The protein localises to the cytoplasm. The catalysed reaction is (6R)-5,10-methylene-5,6,7,8-tetrahydrofolate + glycine + H2O = (6S)-5,6,7,8-tetrahydrofolate + L-serine. The protein operates within one-carbon metabolism; tetrahydrofolate interconversion. It functions in the pathway amino-acid biosynthesis; glycine biosynthesis; glycine from L-serine: step 1/1. In terms of biological role, catalyzes the reversible interconversion of serine and glycine with tetrahydrofolate (THF) serving as the one-carbon carrier. This reaction serves as the major source of one-carbon groups required for the biosynthesis of purines, thymidylate, methionine, and other important biomolecules. Also exhibits THF-independent aldolase activity toward beta-hydroxyamino acids, producing glycine and aldehydes, via a retro-aldol mechanism. The protein is Serine hydroxymethyltransferase of Shewanella sp. (strain MR-4).